A 621-amino-acid polypeptide reads, in one-letter code: Chaperone protein HtpG (621 aa).

Positions 1-341 (MSNQEYTFQT…SEDLPLNVSR (341 aa)) are a; substrate-binding. The b stretch occupies residues 342–547 (EILQQNKILA…GDEQNAMMAN (206 aa)). The tract at residues 548–621 (LMRQMGQNMP…RLNSVLLKAL (74 aa)) is c.

The protein belongs to the heat shock protein 90 family. As to quaternary structure, homodimer.

It localises to the cytoplasm. Functionally, molecular chaperone. Has ATPase activity. This is Chaperone protein HtpG from Helicobacter acinonychis (strain Sheeba).